The sequence spans 311 residues: Methionyl-tRNA formyltransferase (311 aa).

Position 109-112 (109-112 (SLLP)) interacts with (6S)-5,6,7,8-tetrahydrofolate.

This sequence belongs to the Fmt family.

The catalysed reaction is L-methionyl-tRNA(fMet) + (6R)-10-formyltetrahydrofolate = N-formyl-L-methionyl-tRNA(fMet) + (6S)-5,6,7,8-tetrahydrofolate + H(+). Attaches a formyl group to the free amino group of methionyl-tRNA(fMet). The formyl group appears to play a dual role in the initiator identity of N-formylmethionyl-tRNA by promoting its recognition by IF2 and preventing the misappropriation of this tRNA by the elongation apparatus. The polypeptide is Methionyl-tRNA formyltransferase (Staphylococcus aureus (strain USA300)).